The sequence spans 638 residues: Threonine--tRNA ligase (638 aa).

A TGS domain is found at 1-63 (MVMIQIELPD…TESGRLEIIT (63 aa)). Residues 245-536 (DHRRIGRELD…LIEHYAGNFP (292 aa)) are catalytic. Zn(2+)-binding residues include Cys337, His388, and His513.

It belongs to the class-II aminoacyl-tRNA synthetase family. Homodimer. It depends on Zn(2+) as a cofactor.

The protein localises to the cytoplasm. It carries out the reaction tRNA(Thr) + L-threonine + ATP = L-threonyl-tRNA(Thr) + AMP + diphosphate + H(+). Catalyzes the attachment of threonine to tRNA(Thr) in a two-step reaction: L-threonine is first activated by ATP to form Thr-AMP and then transferred to the acceptor end of tRNA(Thr). Also edits incorrectly charged L-seryl-tRNA(Thr). In Syntrophotalea carbinolica (strain DSM 2380 / NBRC 103641 / GraBd1) (Pelobacter carbinolicus), this protein is Threonine--tRNA ligase.